Here is a 761-residue protein sequence, read N- to C-terminus: 52 kDa repressor of the inhibitor of the protein kinase (761 aa).

The THAP-type zinc finger occupies 1-86 (MPNFCAAPNC…LRDNAIPTIF (86 aa)). A compositionally biased stretch (basic and acidic residues) spans 116–132 (QKKIDETSEQEQKHKET). Residues 116–149 (QKKIDETSEQEQKHKETNNSNAQNPSEEEGEGQD) form a disordered region. Serine 566 carries the post-translational modification Phosphoserine.

As to quaternary structure, interacts with DNAJC3, probably sequestring it.

Upstream regulator of interferon-induced serine/threonine protein kinase R (PKR). May block the PKR-inhibitory function of DNAJC3, resulting in restoration of kinase activity and suppression of cell growth. This chain is 52 kDa repressor of the inhibitor of the protein kinase, found in Homo sapiens (Human).